A 752-amino-acid polypeptide reads, in one-letter code: Myotubularin-related protein 10 (752 aa).

The Myotubularin phosphatase domain maps to 206–636 (FDCSSDWDRE…SHLSVWKLYF (431 aa)). A coiled-coil region spans residues 652 to 683 (TAFHKLSVLTDEIEMLQNQLRQYKGAAGTANT).

Belongs to the protein-tyrosine phosphatase family. Non-receptor class myotubularin subfamily.

The protein is Myotubularin-related protein 10 (mtmr10) of Danio rerio (Zebrafish).